A 240-amino-acid polypeptide reads, in one-letter code: Octanoyltransferase (240 aa).

The region spanning 49–233 (HQAEELVWLL…AFESVFGATR (185 aa)) is the BPL/LPL catalytic domain. Substrate is bound by residues 87–94 (RGGQVTYH), 162–164 (AIG), and 175–177 (GIA). Cys-193 functions as the Acyl-thioester intermediate in the catalytic mechanism.

This sequence belongs to the LipB family.

The protein resides in the cytoplasm. The catalysed reaction is octanoyl-[ACP] + L-lysyl-[protein] = N(6)-octanoyl-L-lysyl-[protein] + holo-[ACP] + H(+). The protein operates within protein modification; protein lipoylation via endogenous pathway; protein N(6)-(lipoyl)lysine from octanoyl-[acyl-carrier-protein]: step 1/2. Functionally, catalyzes the transfer of endogenously produced octanoic acid from octanoyl-acyl-carrier-protein onto the lipoyl domains of lipoate-dependent enzymes. Lipoyl-ACP can also act as a substrate although octanoyl-ACP is likely to be the physiological substrate. The sequence is that of Octanoyltransferase from Bradyrhizobium sp. (strain ORS 278).